The chain runs to 238 residues: Demethylmenaquinone methyltransferase (238 aa).

Residues T65, D85, and 109-110 (DA) each bind S-adenosyl-L-methionine.

It belongs to the class I-like SAM-binding methyltransferase superfamily. MenG/UbiE family.

It catalyses the reaction a 2-demethylmenaquinol + S-adenosyl-L-methionine = a menaquinol + S-adenosyl-L-homocysteine + H(+). Its pathway is quinol/quinone metabolism; menaquinone biosynthesis; menaquinol from 1,4-dihydroxy-2-naphthoate: step 2/2. In terms of biological role, methyltransferase required for the conversion of demethylmenaquinol (DMKH2) to menaquinol (MKH2). This chain is Demethylmenaquinone methyltransferase, found in Roseiflexus castenholzii (strain DSM 13941 / HLO8).